A 65-amino-acid polypeptide reads, in one-letter code: Small, acid-soluble spore protein Tlp (65 aa).

The protein belongs to the Tlp family.

It localises to the spore core. The chain is Small, acid-soluble spore protein Tlp from Bacillus cereus (strain B4264).